The sequence spans 716 residues: Fatty acid oxidation complex subunit alpha (716 aa).

The interval 1–189 is enoyl-CoA hydratase/isomerase; it reads MIYQSPTIQV…KVGAVDSVVA (189 aa). Asp296 serves as a coordination point for substrate. The tract at residues 311-716 is 3-hydroxyacyl-CoA dehydrogenase; that stretch reads KEVNNAAVLG…AANNGSYYQA (406 aa). NAD(+) contacts are provided by residues Met324, Asp343, 400 to 402, Lys407, and Ser429; that span reads VVE. His450 acts as the For 3-hydroxyacyl-CoA dehydrogenase activity in catalysis. Asn453 is an NAD(+) binding site. Substrate is bound by residues Asn500 and Tyr660.

This sequence in the N-terminal section; belongs to the enoyl-CoA hydratase/isomerase family. The protein in the C-terminal section; belongs to the 3-hydroxyacyl-CoA dehydrogenase family. As to quaternary structure, heterotetramer of two alpha chains (FadB) and two beta chains (FadA).

The enzyme catalyses a (3S)-3-hydroxyacyl-CoA + NAD(+) = a 3-oxoacyl-CoA + NADH + H(+). The catalysed reaction is a (3S)-3-hydroxyacyl-CoA = a (2E)-enoyl-CoA + H2O. It carries out the reaction a 4-saturated-(3S)-3-hydroxyacyl-CoA = a (3E)-enoyl-CoA + H2O. It catalyses the reaction (3S)-3-hydroxybutanoyl-CoA = (3R)-3-hydroxybutanoyl-CoA. The enzyme catalyses a (3Z)-enoyl-CoA = a 4-saturated (2E)-enoyl-CoA. The catalysed reaction is a (3E)-enoyl-CoA = a 4-saturated (2E)-enoyl-CoA. Its pathway is lipid metabolism; fatty acid beta-oxidation. Its function is as follows. Involved in the aerobic and anaerobic degradation of long-chain fatty acids via beta-oxidation cycle. Catalyzes the formation of 3-oxoacyl-CoA from enoyl-CoA via L-3-hydroxyacyl-CoA. It can also use D-3-hydroxyacyl-CoA and cis-3-enoyl-CoA as substrate. In Shewanella baltica (strain OS185), this protein is Fatty acid oxidation complex subunit alpha.